Here is a 325-residue protein sequence, read N- to C-terminus: DNA-directed RNA polymerase subunit alpha (325 aa).

The interval 1-231 (MQTSLLKPKI…DQLSVFAALE (231 aa)) is alpha N-terminal domain (alpha-NTD). Residues 246–325 (IDPILLRPVD…ENWPPAGLDK (80 aa)) are alpha C-terminal domain (alpha-CTD).

The protein belongs to the RNA polymerase alpha chain family. Homodimer. The RNAP catalytic core consists of 2 alpha, 1 beta, 1 beta' and 1 omega subunit. When a sigma factor is associated with the core the holoenzyme is formed, which can initiate transcription.

The enzyme catalyses RNA(n) + a ribonucleoside 5'-triphosphate = RNA(n+1) + diphosphate. DNA-dependent RNA polymerase catalyzes the transcription of DNA into RNA using the four ribonucleoside triphosphates as substrates. The polypeptide is DNA-directed RNA polymerase subunit alpha (Burkholderia thailandensis (strain ATCC 700388 / DSM 13276 / CCUG 48851 / CIP 106301 / E264)).